The sequence spans 158 residues: Large ribosomal subunit protein eL20z (158 aa).

The protein belongs to the eukaryotic ribosomal protein eL20 family.

In Arabidopsis thaliana (Mouse-ear cress), this protein is Large ribosomal subunit protein eL20z (RPL18A1).